The chain runs to 505 residues: Maturase K (505 aa).

This sequence belongs to the intron maturase 2 family. MatK subfamily.

The protein localises to the plastid. It is found in the chloroplast. Functionally, usually encoded in the trnK tRNA gene intron. Probably assists in splicing its own and other chloroplast group II introns. The sequence is that of Maturase K from Kunzea capitata (Pink kunzea).